The sequence spans 227 residues: MVVGILGTKLGMTQVFEAETGKAIPVTVVEAGPCVVTQIKTEQTDGYTAVQIGYGEAKNKTRQLNTKEPKEVNRYLTNAQEGHLVKSGGTPLRYLREYRVDNTGNFELGQQIKVDLFEAGQLVDVTGKSIGKGFAGYQKRHNFRRGPMAHGSKNHRLPGSTGPGTTPGRVYPGKKMAGHLGNVRVTTRKLKIVRIDPERNLLLIKGSIPGKSGTLISIAPANIVGQK.

Residues 144–166 (RRGPMAHGSKNHRLPGSTGPGTT) form a disordered region.

The protein belongs to the universal ribosomal protein uL3 family. Part of the 50S ribosomal subunit. Forms a cluster with proteins L14 and L19.

Functionally, one of the primary rRNA binding proteins, it binds directly near the 3'-end of the 23S rRNA, where it nucleates assembly of the 50S subunit. The chain is Large ribosomal subunit protein uL3 from Trichodesmium erythraeum (strain IMS101).